A 524-amino-acid chain; its full sequence is DNA damage-binding protein CMR1 (524 aa).

The disordered stretch occupies residues 35-79 (EKIIPKPAPPKPKRASAPRAKREPVKRETARPTRQSSRLAGLDAD). The segment covering 54 to 65 (AKREPVKRETAR) has biased composition (basic and acidic residues). WD repeat units lie at residues 184–225 (LVPQ…VKAE), 245–285 (THSR…STEA), 295–332 (LPISAIDMPTSDPNMIIFSTLQGTLGRHDLRTKSSTAE), 336–376 (LTDQ…GKGD), 385–425 (THDS…KWTA), 447–490 (GRWV…LAQL), and 493–524 (DGITAVPAVAHFHPTMDWVAGGNGSGKLCLWM).

It belongs to the WD repeat DDB2/WDR76 family.

DNA-binding protein that binds to both single- and double-stranded DNA. Binds preferentially to UV-damaged DNA. May be involved in DNA-metabolic processes. The polypeptide is DNA damage-binding protein CMR1 (Chaetomium globosum (strain ATCC 6205 / CBS 148.51 / DSM 1962 / NBRC 6347 / NRRL 1970) (Soil fungus)).